A 113-amino-acid chain; its full sequence is Crustacean hyperglycemic hormones B (113 aa).

The first 26 residues, 1 to 26 (MVAFRMMSMALLVVVASSWWASPVEA), serve as a signal peptide directing secretion. Intrachain disulfides connect C46–C82, C62–C78, and C65–C91. V111 bears the Valine amide mark.

It belongs to the arthropod CHH/MIH/GIH/VIH hormone family. As to expression, expressed at a constant level in the eyestalks of juveniles and mature females. A low level expression is seen in the central nervous system.

The protein localises to the secreted. Functionally, hormone found in the sinus gland of isopods and decapods which controls the blood sugar level. Has a secretagogue action over the amylase released from the midgut gland. May act as a stress hormone and may be involved in the control of molting and reproduction. The polypeptide is Crustacean hyperglycemic hormones B (Metapenaeus ensis (Greasyback shrimp)).